The primary structure comprises 342 residues: Pre-mRNA-splicing factor 18 (342 aa).

Methionine 1 carries the post-translational modification N-acetylmethionine.

It belongs to the PRP18 family. As to quaternary structure, heterodimer with PPIH. Interacts with PRPF4 and with the spliceosome. Part of a complex containing U4/U6 snRNPs.

Its subcellular location is the nucleus speckle. In terms of biological role, participates in the second step of pre-mRNA splicing. The protein is Pre-mRNA-splicing factor 18 (Prpf18) of Mus musculus (Mouse).